A 77-amino-acid polypeptide reads, in one-letter code: Large ribosomal subunit protein uL24 (77 aa).

Belongs to the universal ribosomal protein uL24 family. As to quaternary structure, part of the 50S ribosomal subunit.

Functionally, one of two assembly initiator proteins, it binds directly to the 5'-end of the 23S rRNA, where it nucleates assembly of the 50S subunit. One of the proteins that surrounds the polypeptide exit tunnel on the outside of the subunit. The sequence is that of Large ribosomal subunit protein uL24 from Campylobacter jejuni subsp. jejuni serotype O:6 (strain 81116 / NCTC 11828).